Here is a 296-residue protein sequence, read N- to C-terminus: Formamidopyrimidine-DNA glycosylase (296 aa).

Catalysis depends on P2, which acts as the Schiff-base intermediate with DNA. The active-site Proton donor is the E3. The active-site Proton donor; for beta-elimination activity is K58. DNA-binding residues include H106, R125, and K168. An FPG-type zinc finger spans residues 259-295; that stretch reads RVYDRVGHACPTKGCTGRIGRIVQGGRSTFFCETCQV. R285 functions as the Proton donor; for delta-elimination activity in the catalytic mechanism.

Belongs to the FPG family. In terms of assembly, monomer. Requires Zn(2+) as cofactor.

It carries out the reaction Hydrolysis of DNA containing ring-opened 7-methylguanine residues, releasing 2,6-diamino-4-hydroxy-5-(N-methyl)formamidopyrimidine.. The catalysed reaction is 2'-deoxyribonucleotide-(2'-deoxyribose 5'-phosphate)-2'-deoxyribonucleotide-DNA = a 3'-end 2'-deoxyribonucleotide-(2,3-dehydro-2,3-deoxyribose 5'-phosphate)-DNA + a 5'-end 5'-phospho-2'-deoxyribonucleoside-DNA + H(+). In terms of biological role, involved in base excision repair of DNA damaged by oxidation or by mutagenic agents. Acts as a DNA glycosylase that recognizes and removes damaged bases. Has a preference for oxidized purines, such as 7,8-dihydro-8-oxoguanine (8-oxoG). Has AP (apurinic/apyrimidinic) lyase activity and introduces nicks in the DNA strand. Cleaves the DNA backbone by beta-delta elimination to generate a single-strand break at the site of the removed base with both 3'- and 5'-phosphates. This chain is Formamidopyrimidine-DNA glycosylase, found in Methylorubrum populi (strain ATCC BAA-705 / NCIMB 13946 / BJ001) (Methylobacterium populi).